A 63-amino-acid polypeptide reads, in one-letter code: UPF0337 protein Atu0782 (63 aa).

A disordered region spans residues 1 to 63; it reads MGSTSDKIAG…DAVKGAVDRM (63 aa). Positions 51 to 63 are enriched in basic and acidic residues; it reads KAKDAVKGAVDRM.

Belongs to the UPF0337 (CsbD) family.

This is UPF0337 protein Atu0782 from Agrobacterium fabrum (strain C58 / ATCC 33970) (Agrobacterium tumefaciens (strain C58)).